A 362-amino-acid polypeptide reads, in one-letter code: MRKRISAIINKLNISIMMMIVVLMIGCGQQAVEAGKDGAAAATGGRSLSEVLMEVGKSAENAFYSFMALVPDTLGLRVTKDTKKNEVGGYFNSLGGKLGKASDELEEVAKKSEVEGAKDGPIAVAIRAAVDTAKTTLSTLKEHLESLKGIGDDDKVGEATSNQNGVAASTDELKGAFKALKGIVDTAGKEGVAKPKAGDTAVKIGNADNKDGAKVLAAAANAGRAVGDKAAAIVSAVSGEEMLASIVASQEGDADAALAADATAQTSALKFARGGGNAGQLAKEAAKAAAVAGGIALRSLVKGGKLAANNNDDDKVVQSAGVTAVNKLLVAVEGIIKKTVKNVLEKAKGEIDKARAPKATGQ.

The first 26 residues, 1-26 (MRKRISAIINKLNISIMMMIVVLMIG), serve as a signal peptide directing secretion. A lipid anchor (N-palmitoyl cysteine) is attached at cysteine 27. Cysteine 27 is lipidated: S-diacylglycerol cysteine.

The protein belongs to the variable large protein (Vlp) family. Alpha subfamily.

The protein resides in the cell outer membrane. Functionally, the Vlp and Vsp proteins are antigenically distinct proteins, only one vlp or vsp gene is transcriptionally active at any one time. Switching between these genes is a mechanism of host immune response evasion. In Borrelia hermsii, this protein is Variable large protein 25.